We begin with the raw amino-acid sequence, 115 residues long: Large ribosomal subunit protein bL19 (115 aa).

It belongs to the bacterial ribosomal protein bL19 family.

Its function is as follows. This protein is located at the 30S-50S ribosomal subunit interface and may play a role in the structure and function of the aminoacyl-tRNA binding site. In Caldanaerobacter subterraneus subsp. tengcongensis (strain DSM 15242 / JCM 11007 / NBRC 100824 / MB4) (Thermoanaerobacter tengcongensis), this protein is Large ribosomal subunit protein bL19.